A 189-amino-acid chain; its full sequence is MNYFDNKIDQFATYLQKRNNLDHIQFLQVRLGMQVLAKNIGKLIVMYTIAYILNIFLFTLITNLTFYLIRRHAHGAHAPSSFWCYVESIILFILLPLVIVNFHINFLIMIILTVISLGVISVYAPAATKKKPIPVRLIKRKKYYAIIVSLTLFIITLIIKEPFAQFIQLGIIIEAITLLPIFFIKEDLK.

A run of 5 helical transmembrane segments spans residues 49 to 69, 81 to 100, 110 to 130, 143 to 163, and 164 to 184; these read IAYI…FYLI, SFWC…LVIV, IILT…ATKK, YYAI…KEPF, and AQFI…IFFI.

It belongs to the AgrB family.

It localises to the cell membrane. Its function is as follows. Essential for the production of a quorum sensing system signal molecule, the autoinducing peptide (AIP). This quorum sensing system is responsible for the regulation of the expression of virulence factor genes. Involved in the proteolytic processing of AgrD, the precursor of AIP. The sequence is that of Accessory gene regulator protein B from Staphylococcus aureus (strain COL).